A 404-amino-acid polypeptide reads, in one-letter code: Tryptophan synthase beta chain (404 aa).

An N6-(pyridoxal phosphate)lysine modification is found at lysine 98.

It belongs to the TrpB family. As to quaternary structure, tetramer of two alpha and two beta chains. Requires pyridoxal 5'-phosphate as cofactor.

The catalysed reaction is (1S,2R)-1-C-(indol-3-yl)glycerol 3-phosphate + L-serine = D-glyceraldehyde 3-phosphate + L-tryptophan + H2O. It participates in amino-acid biosynthesis; L-tryptophan biosynthesis; L-tryptophan from chorismate: step 5/5. In terms of biological role, the beta subunit is responsible for the synthesis of L-tryptophan from indole and L-serine. The sequence is that of Tryptophan synthase beta chain from Acidiphilium cryptum (strain JF-5).